The chain runs to 856 residues: Envelope glycoprotein gp160 (856 aa).

The N-terminal stretch at 1-32 (MRVKEKYQHLWRWGWRWGTMLLGMLMICSATE) is a signal peptide. The Extracellular segment spans residues 33 to 684 (KLWVTVYYGV…ITNWLWYIKL (652 aa)). A disulfide bridge connects residues C54 and C74. N88, N136, N141, N156, N160, N186, N197, N230, N234, N241, N262, N276, N289, N295, N301, N332, N339, and N356 each carry an N-linked (GlcNAc...) asparagine; by host glycan. Intrachain disulfides connect C119/C205, C126/C196, C131/C157, C218/C247, and C228/C239. The segment at 131-156 (CTDLKNDTNTNSSSGRMIMEKGEIKN) is V1. The segment at 157 to 196 (CSFNISTSIRGKVQKEYAFFYKLDIIPIDNDTTSYKLTSC) is V2. A V3 region spans residues 296–330 (CTRPNNNTRKRIRIQRGPGRAFVTIGKIGNMRQAH). A disulfide bridge links C296 with C331. The tract at residues 364 to 374 (SSGGDPEIVTH) is CD4-binding loop. Cystine bridges form between C378/C445 and C385/C418. The tract at residues 385 to 418 (CNSTQLFNSTWFNSTWSTEGSNNTEGSDTITLPC) is V4. 6 N-linked (GlcNAc...) asparagine; by host glycosylation sites follow: N386, N392, N397, N406, N448, and N463. 2 V5 regions span residues 461–471 (SNNESEIFRPG) and 463–471 (NESEIFRPG). Residues 512-532 (AVGIGALFLGFLGAAGSTMGA) form a fusion peptide region. The interval 574–592 (KQLQARILAVERYLKDQQL) is immunosuppression. C598 and C604 are joined by a disulfide. N611, N616, N624, N637, and N674 each carry an N-linked (GlcNAc...) asparagine; by host glycan. A coiled-coil region spans residues 633–667 (REINNYTSLIHSLIEESQNQQEKNEQELLELDKWA). The tract at residues 662–683 (ELDKWASLWNWFNITNWLWYIK) is MPER; binding to GalCer. Residues 685-705 (FIMIVGGLVGLRIVFAVLSIV) traverse the membrane as a helical segment. Residues 706–856 (NRVRQGYSPL…IRQGLERILL (151 aa)) are Cytoplasmic-facing. The short motif at 712–715 (YSPL) is the YXXL motif; contains endocytosis signal element. The tract at residues 718–742 (QTHLPTPRGPDRPEGIEEEGGERDR) is disordered. S-palmitoyl cysteine; by host attachment occurs at residues C764 and C837. Positions 855–856 (LL) match the Di-leucine internalization motif motif.

Belongs to the HIV-1 env protein family. As to quaternary structure, the mature envelope protein (Env) consists of a homotrimer of non-covalently associated gp120-gp41 heterodimers. The resulting complex protrudes from the virus surface as a spike. There seems to be as few as 10 spikes on the average virion. Interacts with host CD4, CCR5 and CXCR4. Gp120 also interacts with the C-type lectins CD209/DC-SIGN and CLEC4M/DC-SIGNR (collectively referred to as DC-SIGN(R)). Gp120 and gp41 interact with GalCer. Gp120 interacts with host ITGA4/ITGB7 complex; on CD4+ T-cells, this interaction results in rapid activation of integrin ITGAL/LFA-1, which facilitates efficient cell-to-cell spreading of HIV-1. Gp120 interacts with cell-associated heparan sulfate; this interaction increases virus infectivity on permissive cells and may be involved in infection of CD4- cells. In terms of assembly, the mature envelope protein (Env) consists of a homotrimer of non-covalently associated gp120-gp41 heterodimers. The resulting complex protrudes from the virus surface as a spike. There seems to be as few as 10 spikes on the average virion. Post-translationally, palmitoylation of the transmembrane protein and of Env polyprotein (prior to its proteolytic cleavage) is essential for their association with host cell membrane lipid rafts. Palmitoylation is therefore required for envelope trafficking to classical lipid rafts, but not for viral replication. In terms of processing, highly glycosylated by host. The high number of glycan on the protein is reffered to as 'glycan shield' because it contributes to hide protein sequence from adaptive immune system. Specific enzymatic cleavages in vivo yield mature proteins. Envelope glycoproteins are synthesized as an inactive precursor that is heavily N-glycosylated and processed likely by host cell furin in the Golgi to yield the mature SU and TM proteins. The cleavage site between SU and TM requires the minimal sequence [KR]-X-[KR]-R. About 2 of the 9 disulfide bonds of gp41 are reduced by P4HB/PDI, following binding to CD4 receptor.

Its subcellular location is the virion membrane. It is found in the host cell membrane. The protein resides in the host endosome membrane. Its function is as follows. Oligomerizes in the host endoplasmic reticulum into predominantly trimers. In a second time, gp160 transits in the host Golgi, where glycosylation is completed. The precursor is then proteolytically cleaved in the trans-Golgi and thereby activated by cellular furin or furin-like proteases to produce gp120 and gp41. Attaches the virus to the host lymphoid cell by binding to the primary receptor CD4. This interaction induces a structural rearrangement creating a high affinity binding site for a chemokine coreceptor like CXCR4 and/or CCR5. Acts as a ligand for CD209/DC-SIGN and CLEC4M/DC-SIGNR, which are respectively found on dendritic cells (DCs), and on endothelial cells of liver sinusoids and lymph node sinuses. These interactions allow capture of viral particles at mucosal surfaces by these cells and subsequent transmission to permissive cells. HIV subverts the migration properties of dendritic cells to gain access to CD4+ T-cells in lymph nodes. Virus transmission to permissive T-cells occurs either in trans (without DCs infection, through viral capture and transmission), or in cis (following DCs productive infection, through the usual CD4-gp120 interaction), thereby inducing a robust infection. In trans infection, bound virions remain infectious over days and it is proposed that they are not degraded, but protected in non-lysosomal acidic organelles within the DCs close to the cell membrane thus contributing to the viral infectious potential during DCs' migration from the periphery to the lymphoid tissues. On arrival at lymphoid tissues, intact virions recycle back to DCs' cell surface allowing virus transmission to CD4+ T-cells. Functionally, acts as a class I viral fusion protein. Under the current model, the protein has at least 3 conformational states: pre-fusion native state, pre-hairpin intermediate state, and post-fusion hairpin state. During fusion of viral and target intracellular membranes, the coiled coil regions (heptad repeats) assume a trimer-of-hairpins structure, positioning the fusion peptide in close proximity to the C-terminal region of the ectodomain. The formation of this structure appears to drive apposition and subsequent fusion of viral and target cell membranes. Complete fusion occurs in host cell endosomes and is dynamin-dependent, however some lipid transfer might occur at the plasma membrane. The virus undergoes clathrin-dependent internalization long before endosomal fusion, thus minimizing the surface exposure of conserved viral epitopes during fusion and reducing the efficacy of inhibitors targeting these epitopes. Membranes fusion leads to delivery of the nucleocapsid into the cytoplasm. The polypeptide is Envelope glycoprotein gp160 (Homo sapiens (Human)).